The following is a 545-amino-acid chain: Chaperonin GroEL 4 (545 aa).

Residues 30 to 33, Lys51, 87 to 91, Gly415, and Asp495 contribute to the ATP site; these read TLGP and DGTTT.

Belongs to the chaperonin (HSP60) family. As to quaternary structure, forms a cylinder of 14 subunits composed of two heptameric rings stacked back-to-back. Interacts with the co-chaperonin GroES.

It is found in the cytoplasm. The enzyme catalyses ATP + H2O + a folded polypeptide = ADP + phosphate + an unfolded polypeptide.. Its function is as follows. Together with its co-chaperonin GroES, plays an essential role in assisting protein folding. The GroEL-GroES system forms a nano-cage that allows encapsulation of the non-native substrate proteins and provides a physical environment optimized to promote and accelerate protein folding. The chain is Chaperonin GroEL 4 from Rhizobium meliloti (strain 1021) (Ensifer meliloti).